A 284-amino-acid polypeptide reads, in one-letter code: Probable palmitoyltransferase ZDHHC24 (284 aa).

The Cytoplasmic portion of the chain corresponds to 1 to 18; sequence MGQPWAAGSTDGAPAQLP. A helical transmembrane segment spans residues 19–39; the sequence is LVLTALWAAAVGLELAYVLVL. Topologically, residues 40–52 are extracellular; that stretch reads GPGPPPLGPLARA. A helical membrane pass occupies residues 53-73; the sequence is LQLALAAFQLLNLLGNVGLFL. Residues 74–137 are Cytoplasmic-facing; that stretch reads RSDPSIRGVM…GRCVGFGNYR (64 aa). The region spanning 94-144 is the DHHC domain; that stretch reads AYCYQCQSQVPPRSGHCSACRVCILRRDHHCRLLGRCVGFGNYRPFLCLLL. Residue cysteine 124 is the S-palmitoyl cysteine intermediate of the active site. The chain crosses the membrane as a helical span at residues 138–158; the sequence is PFLCLLLHAAGVLLHVSVLLG. At 159–166 the chain is on the extracellular side; the sequence is PALSALLR. Residues 167–187 traverse the membrane as a helical segment; sequence AHTPLHMAALLLLPWLMLLTG. At 188-201 the chain is on the cytoplasmic side; it reads RVSLAQFALAFVTD. The helical transmembrane segment at 202–222 threads the bilayer; it reads TCVAGALLCGAGLLFHGMLLL. Topologically, residues 223 to 284 are extracellular; that stretch reads RGQTTWEWAR…TTADVGHTAS (62 aa).

Belongs to the DHHC palmitoyltransferase family.

The protein resides in the membrane. The enzyme catalyses L-cysteinyl-[protein] + hexadecanoyl-CoA = S-hexadecanoyl-L-cysteinyl-[protein] + CoA. Its function is as follows. Probable palmitoyltransferase that could catalyze the addition of palmitate onto various protein substrates. In Homo sapiens (Human), this protein is Probable palmitoyltransferase ZDHHC24.